The sequence spans 207 residues: ATP-dependent Clp protease proteolytic subunit (207 aa).

Ser111 acts as the Nucleophile in catalysis. His136 is a catalytic residue.

This sequence belongs to the peptidase S14 family. As to quaternary structure, fourteen ClpP subunits assemble into 2 heptameric rings which stack back to back to give a disk-like structure with a central cavity, resembling the structure of eukaryotic proteasomes.

Its subcellular location is the cytoplasm. It carries out the reaction Hydrolysis of proteins to small peptides in the presence of ATP and magnesium. alpha-casein is the usual test substrate. In the absence of ATP, only oligopeptides shorter than five residues are hydrolyzed (such as succinyl-Leu-Tyr-|-NHMec, and Leu-Tyr-Leu-|-Tyr-Trp, in which cleavage of the -Tyr-|-Leu- and -Tyr-|-Trp bonds also occurs).. Functionally, cleaves peptides in various proteins in a process that requires ATP hydrolysis. Has a chymotrypsin-like activity. Plays a major role in the degradation of misfolded proteins. The protein is ATP-dependent Clp protease proteolytic subunit of Aeromonas salmonicida (strain A449).